Consider the following 187-residue polypeptide: Ribosome-recycling factor (187 aa).

This sequence belongs to the RRF family.

It localises to the cytoplasm. Functionally, responsible for the release of ribosomes from messenger RNA at the termination of protein biosynthesis. May increase the efficiency of translation by recycling ribosomes from one round of translation to another. The chain is Ribosome-recycling factor from Methylobacterium sp. (strain 4-46).